The following is a 352-amino-acid chain: Glycerol-1-phosphate dehydrogenase [NAD(P)+] (352 aa).

NAD(+)-binding positions include 99-103 (GAKID) and 121-124 (TAPS). Aspartate 126 contacts substrate. Position 130 (serine 130) interacts with NAD(+). A substrate-binding site is contributed by aspartate 173. The Zn(2+) site is built by aspartate 173 and histidine 253. Residue histidine 257 participates in substrate binding. Histidine 269 contributes to the Zn(2+) binding site.

It belongs to the glycerol-1-phosphate dehydrogenase family. It depends on Zn(2+) as a cofactor.

The protein resides in the cytoplasm. It carries out the reaction sn-glycerol 1-phosphate + NAD(+) = dihydroxyacetone phosphate + NADH + H(+). The catalysed reaction is sn-glycerol 1-phosphate + NADP(+) = dihydroxyacetone phosphate + NADPH + H(+). It participates in membrane lipid metabolism; glycerophospholipid metabolism. Its function is as follows. Catalyzes the NAD(P)H-dependent reduction of dihydroxyacetonephosphate (DHAP or glycerone phosphate) to glycerol 1-phosphate (G1P). The G1P thus generated is used as the glycerophosphate backbone of phospholipids in the cellular membranes of Archaea. This is Glycerol-1-phosphate dehydrogenase [NAD(P)+] from Thermoplasma acidophilum (strain ATCC 25905 / DSM 1728 / JCM 9062 / NBRC 15155 / AMRC-C165).